A 394-amino-acid chain; its full sequence is Phosphopentomutase (394 aa).

Residues Asp13, Asp286, His291, Asp327, His328, and His339 each coordinate Mn(2+).

The protein belongs to the phosphopentomutase family. Mn(2+) serves as cofactor.

The protein resides in the cytoplasm. It carries out the reaction 2-deoxy-alpha-D-ribose 1-phosphate = 2-deoxy-D-ribose 5-phosphate. The catalysed reaction is alpha-D-ribose 1-phosphate = D-ribose 5-phosphate. Its pathway is carbohydrate degradation; 2-deoxy-D-ribose 1-phosphate degradation; D-glyceraldehyde 3-phosphate and acetaldehyde from 2-deoxy-alpha-D-ribose 1-phosphate: step 1/2. Functionally, isomerase that catalyzes the conversion of deoxy-ribose 1-phosphate (dRib-1-P) and ribose 1-phosphate (Rib-1-P) to deoxy-ribose 5-phosphate (dRib-5-P) and ribose 5-phosphate (Rib-5-P), respectively. The protein is Phosphopentomutase of Bacillus cereus (strain AH187).